The sequence spans 343 residues: Tetraacyldisaccharide 4'-kinase (343 aa).

Position 53-60 (53-60 (TCGGAGKT)) interacts with ATP.

It belongs to the LpxK family.

The catalysed reaction is a lipid A disaccharide + ATP = a lipid IVA + ADP + H(+). It functions in the pathway glycolipid biosynthesis; lipid IV(A) biosynthesis; lipid IV(A) from (3R)-3-hydroxytetradecanoyl-[acyl-carrier-protein] and UDP-N-acetyl-alpha-D-glucosamine: step 6/6. Transfers the gamma-phosphate of ATP to the 4'-position of a tetraacyldisaccharide 1-phosphate intermediate (termed DS-1-P) to form tetraacyldisaccharide 1,4'-bis-phosphate (lipid IVA). The chain is Tetraacyldisaccharide 4'-kinase from Bartonella quintana (strain Toulouse) (Rochalimaea quintana).